The chain runs to 232 residues: Large ribosomal subunit protein uL1 (232 aa).

It belongs to the universal ribosomal protein uL1 family. In terms of assembly, part of the 50S ribosomal subunit.

Its function is as follows. Binds directly to 23S rRNA. The L1 stalk is quite mobile in the ribosome, and is involved in E site tRNA release. In terms of biological role, protein L1 is also a translational repressor protein, it controls the translation of the L11 operon by binding to its mRNA. This Burkholderia mallei (strain NCTC 10247) protein is Large ribosomal subunit protein uL1.